Here is a 306-residue protein sequence, read N- to C-terminus: Natural cytotoxicity triggering receptor 1 (306 aa).

An N-terminal signal peptide occupies residues 1–21 (MSSTLRALLCLGLCLSQRISA). Residues 22 to 257 (PKQTLPKPII…WDHTAQNLLR (236 aa)) lie on the Extracellular side of the membrane. Ig-like domains follow at residues 42–100 (EKQA…SCIY) and 137–192 (GEKV…RCFG). 2 disulfides stabilise this stretch: Cys-49-Cys-98 and Cys-144-Cys-190. N-linked (GlcNAc...) asparagine glycosylation occurs at Asn-216. Residues 258-278 (MGLAFLVLVALVCLLVEDWLS) form a helical membrane-spanning segment. Topologically, residues 279–306 (RKRTREQASRASTWEGRRRLNKHKDSEE) are cytoplasmic.

This sequence belongs to the natural cytotoxicity receptor (NCR) family. As to quaternary structure, interacts with CD3Z and FCER1G. As to expression, expressed in NK cells.

It localises to the cell membrane. Functionally, cytotoxicity-activating receptor that may contribute to the increased efficiency of activated natural killer (NK) cells to mediate tumor cell lysis. This chain is Natural cytotoxicity triggering receptor 1 (NCR1), found in Macaca fascicularis (Crab-eating macaque).